We begin with the raw amino-acid sequence, 917 residues long: Catenin alpha (917 aa).

Phosphothreonine occurs at positions 643 and 645. Residues Ser-659 and Ser-662 each carry the phosphoserine modification. Positions 878 to 890 are enriched in basic and acidic residues; sequence PLVRPEKPEEVRA. The interval 878 to 905 is disordered; the sequence is PLVRPEKPEEVRAKVRKGSQKKVQNPIH.

This sequence belongs to the vinculin/alpha-catenin family. As to quaternary structure, interacts with arm/armadillo protein. Post-translationally, rapidly phosphorylated by CK2 and more slowly by CK1.

The protein localises to the cytoplasm. Its subcellular location is the cytoskeleton. It localises to the cell junction. It is found in the adherens junction. The protein resides in the cell membrane. Functionally, associates with the cytoplasmic domain of a variety of cadherins. The association of catenins to cadherins produces a complex which is linked to the actin filament network, and which seems to be of primary importance for cadherins cell-adhesion properties. The sequence is that of Catenin alpha from Drosophila melanogaster (Fruit fly).